Here is a 602-residue protein sequence, read N- to C-terminus: Elongation factor 4 (602 aa).

One can recognise a tr-type G domain in the interval 7–188 (ENIRNFSIIA…SIIRLVPPPK (182 aa)). Residues 19 to 24 (DHGKST) and 135 to 138 (NKID) each bind GTP.

It belongs to the TRAFAC class translation factor GTPase superfamily. Classic translation factor GTPase family. LepA subfamily.

The protein localises to the cell inner membrane. It catalyses the reaction GTP + H2O = GDP + phosphate + H(+). Functionally, required for accurate and efficient protein synthesis under certain stress conditions. May act as a fidelity factor of the translation reaction, by catalyzing a one-codon backward translocation of tRNAs on improperly translocated ribosomes. Back-translocation proceeds from a post-translocation (POST) complex to a pre-translocation (PRE) complex, thus giving elongation factor G a second chance to translocate the tRNAs correctly. Binds to ribosomes in a GTP-dependent manner. The sequence is that of Elongation factor 4 from Chlamydia trachomatis serovar D (strain ATCC VR-885 / DSM 19411 / UW-3/Cx).